The primary structure comprises 69 residues: Large ribosomal subunit protein bL31 (69 aa).

Positions 17, 19, 37, and 40 each coordinate Zn(2+).

The protein belongs to the bacterial ribosomal protein bL31 family. Type A subfamily. Part of the 50S ribosomal subunit. It depends on Zn(2+) as a cofactor.

Its function is as follows. Binds the 23S rRNA. The sequence is that of Large ribosomal subunit protein bL31 from Clostridium botulinum (strain Eklund 17B / Type B).